Here is a 683-residue protein sequence, read N- to C-terminus: Pre-mRNA-splicing factor CLF1 (683 aa).

HAT repeat units lie at residues 40-72 (DWQRRKRSEFEEALKRNRLDVRQWLRYAAFEYE), 74-106 (RDMRRARSVFERALAVAPGDVVVWLRYVDCELR), 108-140 (RDVNHARNLLVRATALLPRVDKLWYKYVLMEES), 142-173 (GQVELVRGVYTKWCTLEPAAAAWDAFVDFETR), 175-206 (GQVEHVREVYSRYVMVHPVAATWLKWVAFERK), 291-323 (SILFKRKREYEEQLLAHPLDYDAWWLYLDLLEE), 336-367 (ATVKAVPRSQEKDMQWRKYVNLWLRYLLFLET), 374-407 (LTRSMYQKLVREVIPNTKFTFAKAWIMYAEFEIR), 409-440 (EKLDKARKILGMSLGMCPKPKLFQYYIDLEIK), 442-474 (KEFDRVRRLHEKLLEFQPDVLSNWIEYAELEEN), 476-513 (GDEDRARGIYEIGLTADGGLSQARQLQLMQRYIQFETD), 515-547 (SEFERARALYSRYVALSGYDPNVWISCALYESS), and 582-620 (ENKEQTRAIFEKALRHYTSEKDDEGRILVLQAYKDYESI).

Belongs to the crooked-neck family. As to quaternary structure, associated with the spliceosome.

Its subcellular location is the nucleus. Its function is as follows. Involved in pre-mRNA splicing and cell cycle progression. Required for the spliceosome assembly and initiation of the DNA replication. This is Pre-mRNA-splicing factor CLF1 (CLF1) from Eremothecium gossypii (strain ATCC 10895 / CBS 109.51 / FGSC 9923 / NRRL Y-1056) (Yeast).